Here is a 736-residue protein sequence, read N- to C-terminus: Phosphoribosylformylglycinamidine synthase subunit PurL (736 aa).

His-49 is an active-site residue. Positions 52 and 91 each coordinate ATP. Residue Glu-93 participates in Mg(2+) binding. Substrate contacts are provided by residues 94-97 (SHNH) and Arg-116. Residue His-95 is the Proton acceptor of the active site. Residue Asp-117 coordinates Mg(2+). Gln-240 contributes to the substrate binding site. Asp-268 is a binding site for Mg(2+). 312–314 (ESQ) serves as a coordination point for substrate. The ATP site is built by Asp-493 and Gly-530. Asn-531 is a binding site for Mg(2+). Ser-533 contributes to the substrate binding site.

It belongs to the FGAMS family. In terms of assembly, monomer. Part of the FGAM synthase complex composed of 1 PurL, 1 PurQ and 2 PurS subunits.

The protein localises to the cytoplasm. It catalyses the reaction N(2)-formyl-N(1)-(5-phospho-beta-D-ribosyl)glycinamide + L-glutamine + ATP + H2O = 2-formamido-N(1)-(5-O-phospho-beta-D-ribosyl)acetamidine + L-glutamate + ADP + phosphate + H(+). It functions in the pathway purine metabolism; IMP biosynthesis via de novo pathway; 5-amino-1-(5-phospho-D-ribosyl)imidazole from N(2)-formyl-N(1)-(5-phospho-D-ribosyl)glycinamide: step 1/2. Part of the phosphoribosylformylglycinamidine synthase complex involved in the purines biosynthetic pathway. Catalyzes the ATP-dependent conversion of formylglycinamide ribonucleotide (FGAR) and glutamine to yield formylglycinamidine ribonucleotide (FGAM) and glutamate. The FGAM synthase complex is composed of three subunits. PurQ produces an ammonia molecule by converting glutamine to glutamate. PurL transfers the ammonia molecule to FGAR to form FGAM in an ATP-dependent manner. PurS interacts with PurQ and PurL and is thought to assist in the transfer of the ammonia molecule from PurQ to PurL. In Rhodopseudomonas palustris (strain TIE-1), this protein is Phosphoribosylformylglycinamidine synthase subunit PurL.